The following is a 208-amino-acid chain: MQLGLDFSLVEELVAGVDEVGRGPLCGAVVTAAVILDPLRPIIGLNDSKKLTEARREVLFDEIREKALAWCIARAEVEEIDRLNILHATMLAMQRAVEGLSVTPKLALIDGNRCPRLTVPSAPVVKGDSRVPAIAAASILAKVSRDREMLEMDRLYPGYGIAGHKGYPTPVHLEALQRLGPTPIHRRSFAPVRALLEPVAVDCIAATV.

One can recognise an RNase H type-2 domain in the interval 12-201 (ELVAGVDEVG…VRALLEPVAV (190 aa)). Residues aspartate 18, glutamate 19, and aspartate 110 each contribute to the a divalent metal cation site.

The protein belongs to the RNase HII family. The cofactor is Mn(2+). Mg(2+) serves as cofactor.

It is found in the cytoplasm. It carries out the reaction Endonucleolytic cleavage to 5'-phosphomonoester.. Functionally, endonuclease that specifically degrades the RNA of RNA-DNA hybrids. This is Ribonuclease HII from Ectopseudomonas mendocina (strain ymp) (Pseudomonas mendocina).